Reading from the N-terminus, the 327-residue chain is GTP 3',8-cyclase (327 aa).

One can recognise a Radical SAM core domain in the interval Ala4–Arg226. Arg13 provides a ligand contact to GTP. 2 residues coordinate [4Fe-4S] cluster: Cys20 and Cys24. Tyr26 is an S-adenosyl-L-methionine binding site. Cys27 provides a ligand contact to [4Fe-4S] cluster. Position 63 (Arg63) interacts with GTP. Gly67 serves as a coordination point for S-adenosyl-L-methionine. Thr94 contacts GTP. S-adenosyl-L-methionine is bound at residue Ser118. Position 155 (Lys155) interacts with GTP. Met189 provides a ligand contact to S-adenosyl-L-methionine. [4Fe-4S] cluster-binding residues include Cys254 and Cys257. Residue Arg259–Arg261 coordinates GTP. Cys271 provides a ligand contact to [4Fe-4S] cluster.

It belongs to the radical SAM superfamily. MoaA family. As to quaternary structure, monomer and homodimer. [4Fe-4S] cluster is required as a cofactor.

The enzyme catalyses GTP + AH2 + S-adenosyl-L-methionine = (8S)-3',8-cyclo-7,8-dihydroguanosine 5'-triphosphate + 5'-deoxyadenosine + L-methionine + A + H(+). Its pathway is cofactor biosynthesis; molybdopterin biosynthesis. Catalyzes the cyclization of GTP to (8S)-3',8-cyclo-7,8-dihydroguanosine 5'-triphosphate. This is GTP 3',8-cyclase from Heliobacterium modesticaldum (strain ATCC 51547 / Ice1).